The primary structure comprises 78 residues: Large ribosomal subunit protein bL28 (78 aa).

The interval 1–20 (MSRVCQVTGKGPVTGNNISH) is disordered.

It belongs to the bacterial ribosomal protein bL28 family.

The sequence is that of Large ribosomal subunit protein bL28 from Pseudomonas putida (strain ATCC 700007 / DSM 6899 / JCM 31910 / BCRC 17059 / LMG 24140 / F1).